A 397-amino-acid chain; its full sequence is Elongation factor Tu-1 (397 aa).

Residues 10-206 form the tr-type G domain; sequence KPHVNIGTIG…AVDESIPEPE (197 aa). Residues 19 to 26 form a G1 region; it reads GHIDHGKT. Position 19–26 (19–26) interacts with GTP; it reads GHIDHGKT. Thr-26 serves as a coordination point for Mg(2+). The G2 stretch occupies residues 62–66; the sequence is GITIS. Positions 83 to 86 are G3; it reads DCPG. Residues 83–87 and 138–141 each bind GTP; these read DCPGH and NKAD. Residues 138–141 form a G4 region; that stretch reads NKAD. The G5 stretch occupies residues 176–178; it reads SAL.

The protein belongs to the TRAFAC class translation factor GTPase superfamily. Classic translation factor GTPase family. EF-Tu/EF-1A subfamily. As to quaternary structure, monomer.

The protein resides in the cytoplasm. It catalyses the reaction GTP + H2O = GDP + phosphate + H(+). In terms of biological role, GTP hydrolase that promotes the GTP-dependent binding of aminoacyl-tRNA to the A-site of ribosomes during protein biosynthesis. This chain is Elongation factor Tu-1, found in Streptomyces ramocissimus.